The chain runs to 502 residues: UDP-glucuronosyltransferase 2C1 (502 aa).

Residues Asn-177 and Asn-288 are each glycosylated (N-linked (GlcNAc...) asparagine). The helical transmembrane segment at 466-481 (VVVFLLTCVATIIFLA) threads the bilayer.

Belongs to the UDP-glycosyltransferase family.

The protein localises to the microsome membrane. It localises to the endoplasmic reticulum membrane. The enzyme catalyses glucuronate acceptor + UDP-alpha-D-glucuronate = acceptor beta-D-glucuronoside + UDP + H(+). In terms of biological role, UDPGT is of major importance in the conjugation and subsequent elimination of potentially toxic xenobiotics and endogenous compounds. This is UDP-glucuronosyltransferase 2C1 (UGT2C1) from Oryctolagus cuniculus (Rabbit).